Consider the following 208-residue polypeptide: Non-specific lipid transfer protein GPI-anchored 4 (208 aa).

An N-terminal signal peptide occupies residues 1–25 (MKQSLLLSFVLLLLSSSSLVTPIHA). N-linked (GlcNAc...) asparagine glycans are attached at residues Asn27, Asn67, and Asn105. Disulfide bonds link Cys48-Cys91, Cys58-Cys75, Cys76-Cys116, and Cys89-Cys125. Positions 136–181 (GASPVSPSAGAPTTSPSAAKSPETSATSPSSDETPSMTAPSPSSSG) are disordered. Ser179 carries the GPI-anchor amidated serine lipid modification. Positions 180-208 (SGTNILSVPALTIVFVIVSSVAYISAFSN) are cleaved as a propeptide — removed in mature form.

The protein belongs to the plant LTP family. In terms of tissue distribution, confined to the anthers and stamen of the inflorescence, especially in pollen.

Its subcellular location is the cell membrane. Lipid transfer protein involved in seed and ovule maturation and development, probably by regulating the fatty acids homeostasis during suberin and sporopollenin biosynthesis or deposition. This is Non-specific lipid transfer protein GPI-anchored 4 from Arabidopsis thaliana (Mouse-ear cress).